We begin with the raw amino-acid sequence, 153 residues long: Prefoldin subunit alpha (153 aa).

Positions 126 to 153 are disordered; that stretch reads KRLEQGYRQAPGGSPVPHRHDHEDHDEE. Positions 143–153 are enriched in basic and acidic residues; that stretch reads HRHDHEDHDEE.

The protein belongs to the prefoldin alpha subunit family. Heterohexamer of two alpha and four beta subunits.

It is found in the cytoplasm. Molecular chaperone capable of stabilizing a range of proteins. Seems to fulfill an ATP-independent, HSP70-like function in archaeal de novo protein folding. The polypeptide is Prefoldin subunit alpha (Methanoregula boonei (strain DSM 21154 / JCM 14090 / 6A8)).